Reading from the N-terminus, the 439-residue chain is Taxadien-5-alpha-ol O-acetyltransferase (439 aa).

Residues His-164 and Asp-373 each act as proton acceptor in the active site.

This sequence belongs to the plant acyltransferase family.

It catalyses the reaction taxa-4(20),11-dien-5alpha-ol + acetyl-CoA = taxa-4(20),11-dien-5alpha-yl acetate + CoA. It participates in alkaloid biosynthesis; taxol biosynthesis; 10-deacetyl-2-debenzoylbaccatin III from taxa-4(20),11-dien-5alpha-ol: step 1/3. This Taxus chinensis (Chinese yew) protein is Taxadien-5-alpha-ol O-acetyltransferase.